Consider the following 334-residue polypeptide: DNA-directed RNA polymerase subunit alpha (334 aa).

The segment at 1 to 232 (MVREEIAVST…IDLFIPFLHA (232 aa)) is alpha N-terminal domain (alpha-NTD). The interval 268 to 334 (GIALKCIFID…ILQKHFTIDC (67 aa)) is alpha C-terminal domain (alpha-CTD).

It belongs to the RNA polymerase alpha chain family. As to quaternary structure, in plastids the minimal PEP RNA polymerase catalytic core is composed of four subunits: alpha, beta, beta', and beta''. When a (nuclear-encoded) sigma factor is associated with the core the holoenzyme is formed, which can initiate transcription.

It is found in the plastid. The protein resides in the chloroplast. The enzyme catalyses RNA(n) + a ribonucleoside 5'-triphosphate = RNA(n+1) + diphosphate. DNA-dependent RNA polymerase catalyzes the transcription of DNA into RNA using the four ribonucleoside triphosphates as substrates. This is DNA-directed RNA polymerase subunit alpha from Chloranthus spicatus (Chulantree).